Reading from the N-terminus, the 243-residue chain is HTH-type quorum sensing-dependent transcriptional regulator RpaR (243 aa).

The HTH luxR-type domain occupies 174 to 239; the sequence is KPIRRNRLTP…AAVAKALTLG (66 aa). The segment at residues 198–217 is a DNA-binding region (H-T-H motif); that stretch reads AWEISVILCITERTVKFHLI.

Belongs to the autoinducer-regulated transcriptional regulatory protein family.

In terms of biological role, responds to the quorum-sensing autoinducer 4-coumaroyl-homoserine lactone to regulate expression of several genes. Represses expression of rpaI in the absence of the inducer. In Rhodopseudomonas palustris (strain ATCC BAA-98 / CGA009), this protein is HTH-type quorum sensing-dependent transcriptional regulator RpaR.